Reading from the N-terminus, the 154-residue chain is UPF0225 protein Asuc_0343 (154 aa).

The protein belongs to the UPF0225 family.

This chain is UPF0225 protein Asuc_0343, found in Actinobacillus succinogenes (strain ATCC 55618 / DSM 22257 / CCUG 43843 / 130Z).